The chain runs to 342 residues: Methionine import ATP-binding protein MetN 3 (342 aa).

One can recognise an ABC transporter domain in the interval 2–241 (ISLKGISKTF…PKEQMTKEFV (240 aa)). 38–45 (GYSGAGKS) is an ATP binding site.

Belongs to the ABC transporter superfamily. Methionine importer (TC 3.A.1.24) family. As to quaternary structure, the complex is composed of two ATP-binding proteins (MetN), two transmembrane proteins (MetI) and a solute-binding protein (MetQ).

It is found in the cell membrane. It catalyses the reaction L-methionine(out) + ATP + H2O = L-methionine(in) + ADP + phosphate + H(+). The catalysed reaction is D-methionine(out) + ATP + H2O = D-methionine(in) + ADP + phosphate + H(+). In terms of biological role, part of the ABC transporter complex MetNIQ involved in methionine import. Responsible for energy coupling to the transport system. This is Methionine import ATP-binding protein MetN 3 from Shouchella clausii (strain KSM-K16) (Alkalihalobacillus clausii).